The following is a 102-amino-acid chain: Death-associated protein 1 (102 aa).

The interval 1–102 is disordered; sequence MSSPPEGKLE…RTQHIQQPRK (102 aa). Ser-2 is modified (N-acetylserine). Ser-3 carries the post-translational modification Phosphoserine; by MTOR. N6-acetyllysine is present on Lys-29. The segment covering 32-43 has biased composition (basic and acidic residues); it reads HTGDTKEEKDKD. Ser-49 is modified (phosphoserine). Ser-51 carries the post-translational modification Phosphoserine; by MTOR. Residue Ser-91 is modified to Phosphoserine. Residues 92-102 are compositionally biased toward polar residues; that stretch reads PRTQHIQQPRK.

Belongs to the DAP-DAPL1 family. Associates with ribosomes; inhibiting translation. Interacts with eiF5a (EIF5A and EIF5A2); inhibiting translation. Phosphorylated. Phosphorylation by MTOR inhibits the suppressive activity of DAP toward autophagy.

Its function is as follows. Ribosome-binding protein involved in ribosome hibernation, a process during which ribosomes are stabilized in an inactive state and preserved from proteasomal degradation. Acts via its association with eiF5a (EIF5A and EIF5A2) at the polypeptide exit tunnel of the ribosome, preventing mRNA translation. Involved in ribosome hibernation in the mature oocyte by preventing mRNA translation, leading to ribosome inactivation. Ribosomes, which are produced in large quantities during oogenesis, are stored and translationally repressed in the oocyte and early embryo. Also acts as a negative regulator of autophagy. Involved in mediating interferon-gamma-induced cell death. This Homo sapiens (Human) protein is Death-associated protein 1.